Reading from the N-terminus, the 591-residue chain is Mono(ADP-ribosyl)transferase SpvB (591 aa).

The 204-residue stretch at 373–576 folds into the TR mART core domain; the sequence is PMMGGNSSRP…LRLSDDATAD (204 aa). Residues R471, S501, and E538 contribute to the active site.

This sequence belongs to the SpvB family.

Its subcellular location is the secreted. It catalyses the reaction L-arginyl-[protein] + NAD(+) = N(omega)-(ADP-D-ribosyl)-L-arginyl-[protein] + nicotinamide + H(+). In terms of biological role, mono-ADP-ribosylates eukaryotic muscle and non-muscle actin on 'Arg-177'. ADP-ribosylation prevents the polymerization of G-actin to F-actin, causing actin filament depolymerization, destruction of the cytoskeleton and cytotoxicity. Does not possess NAD(+)-glycohydrolase activity, unlike most mART enzymes. The sequence is that of Mono(ADP-ribosyl)transferase SpvB (spvB) from Salmonella enteritidis.